The sequence spans 53 residues: Photosystem II reaction center protein K (53 aa).

Positions 1 to 16 (MFYTNVETLLNTNCFA) are excised as a propeptide. A helical transmembrane segment spans residues 28–48 (LVDVLPIIPLLFLLLAFVWQA).

The protein belongs to the PsbK family. As to quaternary structure, PSII is composed of 1 copy each of membrane proteins PsbA, PsbB, PsbC, PsbD, PsbE, PsbF, PsbH, PsbI, PsbJ, PsbK, PsbL, PsbM, PsbT, PsbY, PsbZ, Psb30/Ycf12, at least 3 peripheral proteins of the oxygen-evolving complex and a large number of cofactors. It forms dimeric complexes.

The protein localises to the plastid. The protein resides in the chloroplast thylakoid membrane. In terms of biological role, one of the components of the core complex of photosystem II (PSII). PSII is a light-driven water:plastoquinone oxidoreductase that uses light energy to abstract electrons from H(2)O, generating O(2) and a proton gradient subsequently used for ATP formation. It consists of a core antenna complex that captures photons, and an electron transfer chain that converts photonic excitation into a charge separation. In Euglena anabaena (Euglenaria anabaena), this protein is Photosystem II reaction center protein K.